A 159-amino-acid polypeptide reads, in one-letter code: 2-C-methyl-D-erythritol 2,4-cyclodiphosphate synthase (159 aa).

Residues Asp9 and His11 each coordinate a divalent metal cation. 4-CDP-2-C-methyl-D-erythritol 2-phosphate-binding positions include 9-11 (DVH) and 35-36 (HS). His43 serves as a coordination point for a divalent metal cation. 4-CDP-2-C-methyl-D-erythritol 2-phosphate is bound by residues 57 to 59 (DIG), 62 to 66 (FPDTD), 133 to 136 (TTTE), Phe140, and Arg143.

Belongs to the IspF family. As to quaternary structure, homotrimer. A divalent metal cation serves as cofactor.

It carries out the reaction 4-CDP-2-C-methyl-D-erythritol 2-phosphate = 2-C-methyl-D-erythritol 2,4-cyclic diphosphate + CMP. Its pathway is isoprenoid biosynthesis; isopentenyl diphosphate biosynthesis via DXP pathway; isopentenyl diphosphate from 1-deoxy-D-xylulose 5-phosphate: step 4/6. Its function is as follows. Involved in the biosynthesis of isopentenyl diphosphate (IPP) and dimethylallyl diphosphate (DMAPP), two major building blocks of isoprenoid compounds. Catalyzes the conversion of 4-diphosphocytidyl-2-C-methyl-D-erythritol 2-phosphate (CDP-ME2P) to 2-C-methyl-D-erythritol 2,4-cyclodiphosphate (ME-CPP) with a corresponding release of cytidine 5-monophosphate (CMP). This is 2-C-methyl-D-erythritol 2,4-cyclodiphosphate synthase from Mannheimia succiniciproducens (strain KCTC 0769BP / MBEL55E).